We begin with the raw amino-acid sequence, 1452 residues long: Protein clueless (1452 aa).

Disordered stretches follow at residues 1–93 and 266–288; these read MALE…SNGH and KKTR…VSEP. Positions 8–24 are enriched in low complexity; the sequence is KNSNATATSDATATKAS. Polar residues predominate over residues 42-59; sequence PIPNSNHQNSNQNLVNGN. Basic residues predominate over residues 68-77; that stretch reads AKKKGKKNRN. A Phosphoserine modification is found at S272. The Clu domain maps to 426-668; the sequence is RAEDAFSSKL…RTFPPDVNFL (243 aa). 3 disordered regions span residues 726 to 775, 962 to 1013, and 1414 to 1452; these read KQSE…GDTK, AVSS…SSVS, and ANNN…ATSS. The span at 750-766 shows a compositional bias: basic and acidic residues; that stretch reads GADKTDVKEEKNEENEK. Over residues 970–985 the composition is skewed to basic residues; that stretch reads KKRGNGGKHNKHKSSK. Residues 990 to 1013 are compositionally biased toward low complexity; the sequence is QQQQQATGNQNGSSSGSSNGSSVS. Residues 1423-1433 are compositionally biased toward basic and acidic residues; that stretch reads AVPKDVEEQKE.

The protein belongs to the CLU family.

It localises to the cytoplasm. In terms of biological role, mRNA-binding protein involved in proper cytoplasmic distribution of mitochondria. This chain is Protein clueless, found in Drosophila erecta (Fruit fly).